Here is a 351-residue protein sequence, read N- to C-terminus: C-X-C chemokine receptor type 1 (351 aa).

Topologically, residues 1–46 are extracellular; it reads MSNITDPQMWDYDGDPNFTGMPPIDEDYRPCRLETETLNKYVVIVT. Asn-3 is a glycosylation site (N-linked (GlcNAc...) asparagine). A helical transmembrane segment spans residues 47 to 67; it reads YALVFLLSLLGNSLVMLVILY. At 68 to 76 the chain is on the cytoplasmic side; it reads SRVGRSVTD. Residues 77–97 form a helical membrane-spanning segment; that stretch reads VYLLNLALADLLFALTLPIWA. The Extracellular portion of the chain corresponds to 98-112; it reads VSKVNGWIFGTLLCK. A disulfide bond links Cys-111 and Cys-188. Residues 113-133 form a helical membrane-spanning segment; sequence VVSLLKEVNFYSGILLLACIS. At 134–154 the chain is on the cytoplasmic side; sequence VDRYLAIVHATRTLTQKRHLV. A helical transmembrane segment spans residues 155–175; it reads KFVCLSCWGLSMILSLPFFLF. Topologically, residues 176-209 are extracellular; it reads RQAYHPKNSSPVCYEVLGNDTAKWRMVLRILPHT. N-linked (GlcNAc...) asparagine glycosylation occurs at Asn-194. The helical transmembrane segment at 210–230 threads the bilayer; that stretch reads FGFIVPLFVMLFCYGFALCTL. Residues 231–243 lie on the Cytoplasmic side of the membrane; the sequence is FKAHMGQKHRAMR. The chain crosses the membrane as a helical span at residues 244 to 264; the sequence is VIFAVVLIFLLCWLPYNLVLL. The Extracellular portion of the chain corresponds to 265–289; the sequence is ADTLMRTQLIKESCERRNDIGWALD. The helical transmembrane segment at 290 to 310 threads the bilayer; that stretch reads ATEILGFLHSCLNPIIYAFIG. The Cytoplasmic portion of the chain corresponds to 311–351; that stretch reads QNFRHGFLKILAMHGLVSKEFLARHHVTSYTSSSVNVSSNL.

It belongs to the G-protein coupled receptor 1 family. Interacts with IL8. Interacts with GNAI2.

It is found in the cell membrane. Receptor to interleukin-8, which is a powerful neutrophils chemotactic factor. Binding of IL-8 to the receptor causes activation of neutrophils. This response is mediated via a G-protein that activates a phosphatidylinositol-calcium second messenger system. The chain is C-X-C chemokine receptor type 1 (CXCR1) from Pongo pygmaeus (Bornean orangutan).